The following is a 119-amino-acid chain: Ribosome-binding factor A (119 aa).

This sequence belongs to the RbfA family. As to quaternary structure, monomer. Binds 30S ribosomal subunits, but not 50S ribosomal subunits or 70S ribosomes.

It is found in the cytoplasm. In terms of biological role, one of several proteins that assist in the late maturation steps of the functional core of the 30S ribosomal subunit. Associates with free 30S ribosomal subunits (but not with 30S subunits that are part of 70S ribosomes or polysomes). Required for efficient processing of 16S rRNA. May interact with the 5'-terminal helix region of 16S rRNA. The polypeptide is Ribosome-binding factor A (Mycoplasmoides gallisepticum (strain R(low / passage 15 / clone 2)) (Mycoplasma gallisepticum)).